Reading from the N-terminus, the 125-residue chain is MRHGKTGRKLGRTSSHRTAMLRNMVTSFLRYESVKTTDTRAKELRKLAEKMITLGKRGDVHARRQALAVVRDRAVVTKIFNELAERYRDRPGGYTRIIKAGYREGDSAPISIIECVRDISGTQSK.

This sequence belongs to the bacterial ribosomal protein bL17 family. In terms of assembly, part of the 50S ribosomal subunit. Contacts protein L32.

The chain is Large ribosomal subunit protein bL17 from Syntrophus aciditrophicus (strain SB).